The following is a 212-amino-acid chain: Large ribosomal subunit protein uL3 (212 aa).

An N5-methylglutamine modification is found at glutamine 154.

The protein belongs to the universal ribosomal protein uL3 family. Part of the 50S ribosomal subunit. Forms a cluster with proteins L14 and L19. Methylated by PrmB.

One of the primary rRNA binding proteins, it binds directly near the 3'-end of the 23S rRNA, where it nucleates assembly of the 50S subunit. This Hydrogenovibrio crunogenus (strain DSM 25203 / XCL-2) (Thiomicrospira crunogena) protein is Large ribosomal subunit protein uL3.